The chain runs to 131 residues: MIVGLGTDIVEIARIETRISEVVEKELQTNRLAKRVLTPSELDIFIKSSNPGRYLAKRFAAKEAAAKALGTGIGRGVSFQHIEISNNENGAPIVTFSAGAAERLAALGGVKGHLSIADEKHYATATVILES.

2 residues coordinate Mg(2+): Asp-8 and Glu-63.

Belongs to the P-Pant transferase superfamily. AcpS family. Requires Mg(2+) as cofactor.

Its subcellular location is the cytoplasm. The enzyme catalyses apo-[ACP] + CoA = holo-[ACP] + adenosine 3',5'-bisphosphate + H(+). Transfers the 4'-phosphopantetheine moiety from coenzyme A to a Ser of acyl-carrier-protein. In Shewanella piezotolerans (strain WP3 / JCM 13877), this protein is Holo-[acyl-carrier-protein] synthase.